Reading from the N-terminus, the 199-residue chain is MSSSSLLEDLMQALQCLPSVGPKSAQRMVYHLLDKNRKGALNLSSLLERAVNEIGHCQQCRTFTEQNLCAICDNDKRNKNGMICVVEMPVDVLAIEQTALFSGTYFVLMGHLSPLDGVGPEQLGLNLLDKQLSSGQHSEVILATNPTVEGEATAYYIAEMAKRYAIKVSRIAHGVPVGGELEYVDSTTLSHSFSGRSVF.

The C4-type zinc-finger motif lies at 57 to 72 (CQQCRTFTEQNLCAIC). Residues 81–176 (GMICVVEMPV…KVSRIAHGVP (96 aa)) enclose the Toprim domain.

This sequence belongs to the RecR family.

May play a role in DNA repair. It seems to be involved in an RecBC-independent recombinational process of DNA repair. It may act with RecF and RecO. This is Recombination protein RecR from Psychromonas ingrahamii (strain DSM 17664 / CCUG 51855 / 37).